Reading from the N-terminus, the 88-residue chain is Small ribosomal subunit protein bS18 (88 aa).

A disordered region spans residues 1-26 (MAFAQSGGAGGGGGQRRPFFRRRKTC).

This sequence belongs to the bacterial ribosomal protein bS18 family. As to quaternary structure, part of the 30S ribosomal subunit. Forms a tight heterodimer with protein bS6.

Its function is as follows. Binds as a heterodimer with protein bS6 to the central domain of the 16S rRNA, where it helps stabilize the platform of the 30S subunit. The polypeptide is Small ribosomal subunit protein bS18 (Xanthobacter autotrophicus (strain ATCC BAA-1158 / Py2)).